The sequence spans 2061 residues: Myoferlin (2061 aa).

The 101-residue stretch at 1 to 101 folds into the C2 1 domain; it reads MLRVIVESAS…TGDQSRSLPY (101 aa). Topologically, residues 1–2025 are cytoplasmic; the sequence is MLRVIVESAS…MKFIVWRRFK (2025 aa). Residues 123-172 form a disordered region; it reads GYDPPSAPHPNDLSGPSVPGMGGDGEEDEGDEDRLDNAVRGPGPKGPVGT. The span at 146–156 shows a compositional bias: acidic residues; the sequence is DGEEDEGDEDR. A Phosphoserine modification is found at serine 174. 2 C2 domains span residues 181 to 300 and 339 to 474; these read RLTK…RKWL and DSDD…VEDF. Residues 186–281 form a necessary for interaction with EHD2 region; sequence KNSRRMLSNK…RADCLMGEFK (96 aa). The segment at 323–342 is disordered; it reads LGTGDEPPPERRDRDNDSDD. The Ca(2+) site is built by aspartate 390, aspartate 396, aspartate 444, aspartate 446, and aspartate 452. Lysine 553 carries the post-translational modification N6-acetyllysine. The residue at position 729 (serine 729) is a Phosphoserine. N6-acetyllysine is present on lysine 884. The segment at 938 to 967 is disordered; it reads ESRYPGGDWKPAEDTYTDANGDKAASPSEL. C2 domains lie at 1123–1251 and 1282–1410; these read GANT…LLWH and LPPQ…GKED. Ca(2+) is bound by residues aspartate 1155, aspartate 1161, aspartate 1217, and aspartate 1219. Residue lysine 1507 is modified to N6-acetyllysine. C2 domains are found at residues 1536–1654 and 1772–1920; these read PAPP…SHCG and GPPG…EKCR. Ca(2+) is bound by residues aspartate 1569, aspartate 1575, aspartate 1624, aspartate 1626, aspartate 1891, serine 1894, and aspartate 1897. Serine 1915 carries the phosphoserine modification. The helical transmembrane segment at 2026–2046 threads the bilayer; it reads WVIIGLLFLLILLLFVAVLLY. The Extracellular portion of the chain corresponds to 2047-2061; that stretch reads SLPNYLSMKIVKPNV.

It belongs to the ferlin family. In terms of assembly, interacts with DNM2 and KDR. Interacts with EHD1. Interacts with EHD2; the interaction is direct. Interacts with RIPOR2. Ca(2+) serves as cofactor. As to expression, expressed in myoblast and endothelial cells (at protein level). Highly expressed in cardiac and skeletal muscles. Also present in lung, and at very low levels in kidney, placenta and brain.

It is found in the cell membrane. The protein resides in the nucleus membrane. It localises to the cytoplasmic vesicle membrane. Functionally, calcium/phospholipid-binding protein that plays a role in the plasmalemma repair mechanism of endothelial cells that permits rapid resealing of membranes disrupted by mechanical stress. Involved in endocytic recycling. Implicated in VEGF signal transduction by regulating the levels of the receptor KDR. The polypeptide is Myoferlin (MYOF) (Homo sapiens (Human)).